Consider the following 494-residue polypeptide: Putative NAD kinase 3 (494 aa).

It belongs to the NAD kinase family.

The enzyme catalyses NAD(+) + ATP = ADP + NADP(+) + H(+). In Oryza sativa subsp. japonica (Rice), this protein is Putative NAD kinase 3.